We begin with the raw amino-acid sequence, 513 residues long: ATP synthase subunit alpha (513 aa).

ATP is bound at residue 169 to 176 (GDRQIGKT).

Belongs to the ATPase alpha/beta chains family. F-type ATPases have 2 components, CF(1) - the catalytic core - and CF(0) - the membrane proton channel. CF(1) has five subunits: alpha(3), beta(3), gamma(1), delta(1), epsilon(1). CF(0) has three main subunits: a(1), b(2) and c(9-12). The alpha and beta chains form an alternating ring which encloses part of the gamma chain. CF(1) is attached to CF(0) by a central stalk formed by the gamma and epsilon chains, while a peripheral stalk is formed by the delta and b chains.

The protein resides in the cell inner membrane. The catalysed reaction is ATP + H2O + 4 H(+)(in) = ADP + phosphate + 5 H(+)(out). Functionally, produces ATP from ADP in the presence of a proton gradient across the membrane. The alpha chain is a regulatory subunit. The polypeptide is ATP synthase subunit alpha (Francisella philomiragia subsp. philomiragia (strain ATCC 25017 / CCUG 19701 / FSC 153 / O#319-036)).